The following is a 415-amino-acid chain: Dynein assembly factor with WD repeat domains 1 (415 aa).

8 WD repeats span residues 90–129 (AHIL…ELHT), 132–172 (GHRN…CFYT), 175–214 (GHTA…EVST), 217–256 (GHFA…KVHV), 259–298 (GHRG…CLAT), 301–340 (GHND…CLCQ), 343–384 (GHKG…QVLE), and 385–415 (GHSD…RIWH).

This sequence belongs to the WD repeat WDR69 family. Expressed in organs bearing motile cilia, including the pronephros, otic vesicles and Kupffer's vesicle.

Its subcellular location is the cytoplasm. It is found in the cytoskeleton. The protein localises to the flagellum basal body. The protein resides in the flagellum axoneme. Required for axonemal dynein assembly and ciliary motility in ciliated organs, including Kupffer's vesicle, during embryogenesis. Facilitates the onset of robust cilia motility during development. In Danio rerio (Zebrafish), this protein is Dynein assembly factor with WD repeat domains 1 (daw1).